Here is a 141-residue protein sequence, read N- to C-terminus: Hydroperoxide reductase (141 aa).

It belongs to the OsmC/Ohr family. As to quaternary structure, homodimer.

The protein localises to the cytoplasm. Its function is as follows. Reduces organic and inorganic peroxide substrates. Protects the cell against oxidative stress. The sequence is that of Hydroperoxide reductase from Mycoplasma genitalium (strain ATCC 33530 / DSM 19775 / NCTC 10195 / G37) (Mycoplasmoides genitalium).